The primary structure comprises 138 residues: Putative nickel-responsive regulator (138 aa).

The Ni(2+) site is built by H76, H87, H89, and C95.

Belongs to the transcriptional regulatory CopG/NikR family. Ni(2+) is required as a cofactor.

Transcriptional regulator. The sequence is that of Putative nickel-responsive regulator from Pseudomonas putida (strain ATCC 47054 / DSM 6125 / CFBP 8728 / NCIMB 11950 / KT2440).